Reading from the N-terminus, the 214-residue chain is Osteoclast-stimulating factor 1 (214 aa).

Position 2 is an N-acetylserine (serine 2). The SH3 domain maps to 12–71 (GQVKVFRALYTFEPRTPDELYFEEGDIIYITDMSDTNWWKGTSKGRTGLIPSNYVAEQAE). 3 ANK repeats span residues 72 to 101 (SIDN…GVNG), 105 to 135 (AGST…ELNQ), and 139 to 168 (LGDT…RTDL). Threonine 200 bears the Phosphothreonine mark. Serine 202 and serine 213 each carry phosphoserine.

As to quaternary structure, interacts with SRC and SMN1. Interacts with FASLG.

Its subcellular location is the cytoplasm. Its function is as follows. Induces bone resorption, acting probably through a signaling cascade which results in the secretion of factor(s) enhancing osteoclast formation and activity. The sequence is that of Osteoclast-stimulating factor 1 (OSTF1) from Sus scrofa (Pig).